We begin with the raw amino-acid sequence, 447 residues long: Argininosuccinate synthase (447 aa).

ATP contacts are provided by residues 17–25 (AFSGGLDTS) and A43. Y99 is an L-citrulline binding site. ATP-binding residues include G129 and T131. 3 residues coordinate L-aspartate: T131, N135, and D136. L-citrulline is bound at residue N135. Residue D136 coordinates ATP. L-citrulline-binding residues include R139 and S192. D194 lines the ATP pocket. Residues T201, E203, and E280 each contribute to the L-citrulline site.

Belongs to the argininosuccinate synthase family. Type 2 subfamily. As to quaternary structure, homotetramer.

Its subcellular location is the cytoplasm. It carries out the reaction L-citrulline + L-aspartate + ATP = 2-(N(omega)-L-arginino)succinate + AMP + diphosphate + H(+). The protein operates within amino-acid biosynthesis; L-arginine biosynthesis; L-arginine from L-ornithine and carbamoyl phosphate: step 2/3. The sequence is that of Argininosuccinate synthase from Escherichia coli O127:H6 (strain E2348/69 / EPEC).